A 332-amino-acid chain; its full sequence is Ferredoxin--NADP reductase 2 (332 aa).

Positions 37, 45, 50, 90, 124, 285, and 326 each coordinate FAD.

It belongs to the ferredoxin--NADP reductase type 2 family. Homodimer. It depends on FAD as a cofactor.

The enzyme catalyses 2 reduced [2Fe-2S]-[ferredoxin] + NADP(+) + H(+) = 2 oxidized [2Fe-2S]-[ferredoxin] + NADPH. The sequence is that of Ferredoxin--NADP reductase 2 from Bacillus pumilus (strain SAFR-032).